The chain runs to 171 residues: Allophycocyanin subunit beta-18 (171 aa).

N4-methylasparagine is present on asparagine 72. Cysteine 82 provides a ligand contact to (2R,3E)-phycocyanobilin.

Belongs to the phycobiliprotein family. Heterodimer of an alpha and a beta chain. In terms of processing, contains one covalently linked bilin chromophore.

Its subcellular location is the plastid. It is found in the chloroplast thylakoid membrane. Light-harvesting photosynthetic bile pigment-protein from the phycobiliprotein complex. Allophycocyanin has a maximum absorption at approximately 650 nanometers. This is Allophycocyanin subunit beta-18 (apcF) from Aglaothamnion neglectum (Red alga).